We begin with the raw amino-acid sequence, 254 residues long: Acetylglutamate kinase (254 aa).

Substrate contacts are provided by residues 40 to 41 (GG), arginine 62, and asparagine 154. ATP-binding positions include 177–182 (DVSGIL) and 205–207 (IIT).

The protein belongs to the acetylglutamate kinase family. ArgB subfamily. Homodimer.

The protein localises to the cytoplasm. The catalysed reaction is N-acetyl-L-glutamate + ATP = N-acetyl-L-glutamyl 5-phosphate + ADP. It functions in the pathway amino-acid biosynthesis; L-arginine biosynthesis; N(2)-acetyl-L-ornithine from L-glutamate: step 2/4. Its function is as follows. Catalyzes the ATP-dependent phosphorylation of N-acetyl-L-glutamate. The polypeptide is Acetylglutamate kinase (Yersinia enterocolitica serotype O:8 / biotype 1B (strain NCTC 13174 / 8081)).